The chain runs to 37 residues: Esculentin-2Rb (37 aa).

Cys31 and Cys37 form a disulfide bridge.

Expressed by the skin glands.

The protein resides in the secreted. In terms of biological role, antimicrobial peptide. This chain is Esculentin-2Rb, found in Pelophylax ridibundus (Marsh frog).